Reading from the N-terminus, the 598-residue chain is Elongation factor 4 (598 aa).

Residues 3–185 (QHIRNFSIIA…MIVARIPPPE (183 aa)) form the tr-type G domain. GTP-binding positions include 15–20 (DHGKST) and 132–135 (NKID).

The protein belongs to the TRAFAC class translation factor GTPase superfamily. Classic translation factor GTPase family. LepA subfamily.

The protein localises to the cell inner membrane. It catalyses the reaction GTP + H2O = GDP + phosphate + H(+). Functionally, required for accurate and efficient protein synthesis under certain stress conditions. May act as a fidelity factor of the translation reaction, by catalyzing a one-codon backward translocation of tRNAs on improperly translocated ribosomes. Back-translocation proceeds from a post-translocation (POST) complex to a pre-translocation (PRE) complex, thus giving elongation factor G a second chance to translocate the tRNAs correctly. Binds to ribosomes in a GTP-dependent manner. The polypeptide is Elongation factor 4 (Nitrosomonas eutropha (strain DSM 101675 / C91 / Nm57)).